Consider the following 291-residue polypeptide: Probable L-ascorbate peroxidase 3, peroxisomal (291 aa).

The active-site Proton acceptor is H41. The disordered stretch occupies residues 114-133 (YVPGRRDSSDSPEEGRLPDA). The segment covering 116–133 (PGRRDSSDSPEEGRLPDA) has biased composition (basic and acidic residues). H161 contributes to the heme b binding site. K(+) contacts are provided by T162, T178, and D185. The chain crosses the membrane as a helical span at residues 263-283 (LLMQTAAGVAVAAAVVAWAYL).

The protein belongs to the peroxidase family. Ascorbate peroxidase subfamily. Heme b is required as a cofactor. In terms of tissue distribution, expressed in stems.

Its subcellular location is the peroxisome membrane. It catalyses the reaction L-ascorbate + H2O2 = L-dehydroascorbate + 2 H2O. Functionally, plays a key role in hydrogen peroxide removal. This Oryza sativa subsp. japonica (Rice) protein is Probable L-ascorbate peroxidase 3, peroxisomal.